A 1151-amino-acid polypeptide reads, in one-letter code: Importin beta (1151 aa).

24 HEAT repeats span residues 1-36 (MDLA…KQEE), 37-82 (PASY…GNGN), 83-132 (PECV…VAQF), 133-175 (PEFF…TKIG), 176-222 (GKAI…DSVI), 223-269 (PNSV…AVLK), 270-316 (PMVK…RAKK), 317-377 (AISE…KVIF), 378-416 (PLIK…LVTK), 417-453 (EDIV…EDYA), 454-495 (PTFQ…HLKK), 496-540 (AETY…LKND), 541-593 (FADM…AGTL), 594-642 (PQLF…PETF), 643-704 (PKYM…MRKT), 705-756 (PAAF…TVAS), 757-811 (PPAV…SYTE), 812-880 (TVNK…ALGD), 881-932 (LSLD…KYLS), 933-978 (PANS…YEGD), 979-1027 (PGLA…AQAF), 1028-1074 (PTEL…ARND), 1075-1120 (PNFM…VLTQ), and 1121-1151 (IAGH…SVRQ).

This sequence belongs to the importin beta family.

Its subcellular location is the nucleus intermembrane space. It is found in the cytoplasm. The protein localises to the nucleus. Its function is as follows. Functions in nuclear protein import as nuclear transport receptor. Involved in encystation process. Constitutive expression enhances cyst production and increases transcription of endogenous genes involved in encystation. Level of mRNA of the transcriptional factor myb1-like protein increases in early stages of the encystation process followed by increased mRNAs of the cyst wall proteins cwp1-3. This chain is Importin beta, found in Giardia intestinalis (strain ATCC 50803 / WB clone C6) (Giardia lamblia).